The primary structure comprises 122 residues: Large ribosomal subunit protein uL14 (122 aa).

This sequence belongs to the universal ribosomal protein uL14 family. Part of the 50S ribosomal subunit. Forms a cluster with proteins L3 and L19. In the 70S ribosome, L14 and L19 interact and together make contacts with the 16S rRNA in bridges B5 and B8.

In terms of biological role, binds to 23S rRNA. Forms part of two intersubunit bridges in the 70S ribosome. This is Large ribosomal subunit protein uL14 from Alteromonas mediterranea (strain DSM 17117 / CIP 110805 / LMG 28347 / Deep ecotype).